The chain runs to 277 residues: Mannosyl-3-phosphoglycerate phosphatase (277 aa).

Asp-13 (nucleophile) is an active-site residue. Mg(2+) contacts are provided by Asp-13, Asp-15, and Asp-219.

This sequence belongs to the HAD-like hydrolase superfamily. MPGP family. Mg(2+) is required as a cofactor.

It is found in the cytoplasm. The enzyme catalyses 2-O-(alpha-D-mannosyl)-3-phosphoglycerate + H2O = (2R)-2-O-(alpha-D-mannosyl)-glycerate + phosphate. The protein operates within carbohydrate biosynthesis; 2-(alpha-D-mannosyl)-D-glycerate biosynthesis; 2-(alpha-D-mannosyl)-D-glycerate from GDP-alpha-D-mannose (MPG route): step 2/2. Its function is as follows. Hydrolyzes mannosyl-3-phosphoglycerate (MPG) to form the osmolyte mannosylglycerate (MG). In Aeropyrum pernix (strain ATCC 700893 / DSM 11879 / JCM 9820 / NBRC 100138 / K1), this protein is Mannosyl-3-phosphoglycerate phosphatase.